The following is a 191-amino-acid chain: Cell division protein SepF (191 aa).

The tract at residues 1 to 77 (MEGQDDYQLL…MGSNVIGLPG (77 aa)) is disordered.

The protein belongs to the SepF family. Homodimer. Interacts with FtsZ.

It localises to the cytoplasm. Functionally, cell division protein that is part of the divisome complex and is recruited early to the Z-ring. Probably stimulates Z-ring formation, perhaps through the cross-linking of FtsZ protofilaments. Its function overlaps with FtsA. In Synechococcus sp. (strain JA-2-3B'a(2-13)) (Cyanobacteria bacterium Yellowstone B-Prime), this protein is Cell division protein SepF.